Here is a 199-residue protein sequence, read N- to C-terminus: Large ribosomal subunit protein eL13B (199 aa).

Thr144 and Thr152 each carry phosphothreonine.

Belongs to the eukaryotic ribosomal protein eL13 family. As to quaternary structure, component of the large ribosomal subunit (LSU). Mature yeast ribosomes consist of a small (40S) and a large (60S) subunit. The 40S small subunit contains 1 molecule of ribosomal RNA (18S rRNA) and 33 different proteins (encoded by 57 genes). The large 60S subunit contains 3 rRNA molecules (25S, 5.8S and 5S rRNA) and 46 different proteins (encoded by 81 genes).

The protein resides in the cytoplasm. In terms of biological role, component of the ribosome, a large ribonucleoprotein complex responsible for the synthesis of proteins in the cell. The small ribosomal subunit (SSU) binds messenger RNAs (mRNAs) and translates the encoded message by selecting cognate aminoacyl-transfer RNA (tRNA) molecules. The large subunit (LSU) contains the ribosomal catalytic site termed the peptidyl transferase center (PTC), which catalyzes the formation of peptide bonds, thereby polymerizing the amino acids delivered by tRNAs into a polypeptide chain. The nascent polypeptides leave the ribosome through a tunnel in the LSU and interact with protein factors that function in enzymatic processing, targeting, and the membrane insertion of nascent chains at the exit of the ribosomal tunnel. The chain is Large ribosomal subunit protein eL13B from Saccharomyces cerevisiae (strain ATCC 204508 / S288c) (Baker's yeast).